The primary structure comprises 417 residues: Carbohydrate sulfotransferase 8 (417 aa).

Topologically, residues 1–10 are cytoplasmic; sequence MTPRLGTMRL. The chain crosses the membrane as a helical; Signal-anchor for type II membrane protein span at residues 11–31; it reads ACMFSSILLFGAAGLLLFISL. Topologically, residues 32–417 are lumenal; sequence QDPIELSPQQ…NYSKPFSDLY (386 aa). Positions 47–101 are disordered; the sequence is FSIRPQQPQHDSHLRISTEKGTRDSPSGSPRGLQLQAPDQPRPHPKAAGSPLRLR. A compositionally biased stretch (basic and acidic residues) spans 56 to 69; that stretch reads HDSHLRISTEKGTR. N-linked (GlcNAc...) asparagine glycosylation is found at Asn-121 and Asn-122. 3'-phosphoadenylyl sulfate-binding positions include 191-197 and 251-259; these read PKAGCSN and REPFERLVS. 3 N-linked (GlcNAc...) asparagine glycosylation sites follow: Asn-287, Asn-360, and Asn-408.

This sequence belongs to the sulfotransferase 2 family. As to expression, strongly expressed in brain. Weakly expressed in lung and kidney. Weakly expressed in pituitary.

The protein localises to the golgi apparatus membrane. Functionally, catalyzes the transfer of sulfate to position 4 of non-reducing N-acetylgalactosamine (GalNAc) residues in both N-glycans and O-glycans. Required for biosynthesis of glycoprotein hormones lutropin and thyrotropin, by mediating sulfation of their carbohydrate structures. Only active against terminal GalNAcbeta1,GalNAcbeta. Not active toward chondroitin. In Mus musculus (Mouse), this protein is Carbohydrate sulfotransferase 8 (Chst8).